A 341-amino-acid polypeptide reads, in one-letter code: L-threonine 3-dehydrogenase (341 aa).

C38 lines the Zn(2+) pocket. Active-site charge relay system residues include T40 and H43. 6 residues coordinate Zn(2+): H63, E64, C93, C96, C99, and C107. NAD(+)-binding positions include I175, D195, R200, 262–264 (LGI), and 286–287 (IY).

This sequence belongs to the zinc-containing alcohol dehydrogenase family. As to quaternary structure, homotetramer. Zn(2+) serves as cofactor.

The protein localises to the cytoplasm. It carries out the reaction L-threonine + NAD(+) = (2S)-2-amino-3-oxobutanoate + NADH + H(+). It functions in the pathway amino-acid degradation; L-threonine degradation via oxydo-reductase pathway; glycine from L-threonine: step 1/2. Its function is as follows. Catalyzes the NAD(+)-dependent oxidation of L-threonine to 2-amino-3-ketobutyrate. The chain is L-threonine 3-dehydrogenase from Yersinia pseudotuberculosis serotype O:1b (strain IP 31758).